Reading from the N-terminus, the 404-residue chain is G2/mitotic-specific cyclin-B1 (404 aa).

This sequence belongs to the cyclin family. Cyclin AB subfamily. Interacts with the CDK1 protein kinase to form a serine/threonine kinase holoenzyme complex also known as maturation promoting factor (MPF). The cyclin subunit imparts substrate specificity to the complex.

Functionally, essential for the control of the cell cycle at the G2/M (mitosis) transition. This chain is G2/mitotic-specific cyclin-B1 (ccnb1), found in Oryzias latipes (Japanese rice fish).